A 337-amino-acid polypeptide reads, in one-letter code: MSGAPHIPVLLAEVRGVLRLGEGPGVVVDGTFGAGGYSRALLAADPDLRVIAIDRDPTAVAAGQELAAAAGGRLRLVQGRFGDLDAIVRREGVEAVDGVVLDIGVSSMQLDRAERGFSFRADGPLDMRMEGAGTSAADLVNGAPEAELADIIYHFGEERRSRAVARAILEARRRAPIATTGALAEIVAGVVRAEPGSGIHPATRTFQALRIAVNDELGELNRALHAAERILRPGGRLAVVTFHSLEDRIVKQFFSARSGRAVSASRHLPMAERPVPRSFTLVTKGPVGPSEAEAAANPRARSAKLRAGERTDAPAPEPLAALAALAALPPRERGGRR.

S-adenosyl-L-methionine-binding positions include 35–37, Asp-54, Phe-81, Asp-102, and Gln-109; that span reads GGY. The tract at residues 286 to 316 is disordered; it reads PVGPSEAEAAANPRARSAKLRAGERTDAPAP. Residues 289–300 are compositionally biased toward low complexity; that stretch reads PSEAEAAANPRA.

Belongs to the methyltransferase superfamily. RsmH family.

The protein resides in the cytoplasm. The enzyme catalyses cytidine(1402) in 16S rRNA + S-adenosyl-L-methionine = N(4)-methylcytidine(1402) in 16S rRNA + S-adenosyl-L-homocysteine + H(+). In terms of biological role, specifically methylates the N4 position of cytidine in position 1402 (C1402) of 16S rRNA. The chain is Ribosomal RNA small subunit methyltransferase H from Methylobacterium sp. (strain 4-46).